Here is a 429-residue protein sequence, read N- to C-terminus: Glucose-1-phosphate adenylyltransferase (429 aa).

Residues Gly162, 177–178, and Ser209 each bind alpha-D-glucose 1-phosphate; that span reads EK.

It belongs to the bacterial/plant glucose-1-phosphate adenylyltransferase family. Homotetramer.

The catalysed reaction is alpha-D-glucose 1-phosphate + ATP + H(+) = ADP-alpha-D-glucose + diphosphate. It participates in glycan biosynthesis; glycogen biosynthesis. With respect to regulation, activated by 3-phosphoglycerate and inhibited by phosphate. Functionally, involved in the biosynthesis of ADP-glucose, a building block required for the elongation reactions to produce glycogen. Catalyzes the reaction between ATP and alpha-D-glucose 1-phosphate (G1P) to produce pyrophosphate and ADP-Glc. The protein is Glucose-1-phosphate adenylyltransferase of Nostoc sp. (strain PCC 7120 / SAG 25.82 / UTEX 2576).